Consider the following 761-residue polypeptide: MRYNQFSYIPTKPNEAFEELKGLGFPLNKKNSDKANLEAFLRHSFLNQTDTDYALSLLIVDAKTDALTFFKSNSDLTLENLQWIYLQLLGFVPFVDFKDPKAFLQDINFPVSYDNIFQSLHHLLACRGKSGNTLIDQLVADGLLHADNHYHFFNGKSLATFNTNQLIREVVYVEISLDTMSSGEHDLVKVNIIRPTTEHTIPTMMTASPYHQGINDPAADQKTYQMEGALAVKQPKHIQVDTKPFKEEVKHPSKLPISPATESFTHIDSYSLNDYFLSRGFANIYVSGVGTAGSTGFMTSGDYQQIQSFKAVIDWLNGKVTAFTSHKRDKQVKADWSNGLVATTGKSYLGTMSTGLATTGVEGLKVIIAEAAISTWYDYYRENGLVCSPGGYPGEDLDVLTELTYSRNLLAGDYIKNNDCYQALLNEQSKAIDRQSGDYNQYWHDRNYLTHVNNVKSRVVYTHGLQDWNVKPRHVYKVFNALPQTIKKHLFLHQGQHVYMHNWQSIDFRESMNALLSQELLGIDNHFQLEEVIWQDNTTEQTWQVLDAFGGNHQEQIGLGDSKKLIDNHYDKEAFDTYCKDFNVFKNDLFKGNNKTNQITINLPLKKNYLLNGQCKLHLRVKTSDKKAILSAQILDYGPKKRFKDTPTIKFLNSLDNGKNFAREALRELPFTKDHYRVISKGVLNLQNRTDLLTIEAIEPEQWFDIEFSLQPSIYQLSKGDNLRIILYTTDFEHTIRDNASYSITVDLSQSYLTIPTNQGN.

Catalysis depends on charge relay system residues serine 347, aspartate 467, and histidine 497.

The protein belongs to the peptidase S15 family. Homodimer.

Its subcellular location is the cytoplasm. It catalyses the reaction Hydrolyzes Xaa-Pro-|- bonds to release unblocked, N-terminal dipeptides from substrates including Ala-Pro-|-p-nitroanilide and (sequentially) Tyr-Pro-|-Phe-Pro-|-Gly-Pro-|-Ile.. Its function is as follows. Removes N-terminal dipeptides sequentially from polypeptides having unsubstituted N-termini provided that the penultimate residue is proline. The chain is Xaa-Pro dipeptidyl-peptidase from Streptococcus agalactiae serotype III (strain NEM316).